Consider the following 708-residue polypeptide: Double-strand break repair protein MRE11 (708 aa).

Position 2 is an N-acetylserine (Ser2). Ser2 carries the phosphoserine modification. Mn(2+)-binding residues include Asp20, His22, and Asp60. The interaction with NBN stretch occupies residues 87–117 (RPVQFEILSDQSVNFGFSKFPWVNYQDGNLN). Position 128 (Asn128) interacts with Mn(2+). The Proton donor role is filled by His129. 3 residues coordinate Mn(2+): His217, His245, and His247. A Glycyl lysine isopeptide (Lys-Gly) (interchain with G-Cter in SUMO2) cross-link involves residue Lys255. A Phosphoserine modification is found at Ser275. Lys282 participates in a covalent cross-link: Glycyl lysine isopeptide (Lys-Gly) (interchain with G-Cter in UFM1). Lys339 is covalently cross-linked (Glycyl lysine isopeptide (Lys-Gly) (interchain with G-Cter in ubiquitin)). Lys384 is covalently cross-linked (Glycyl lysine isopeptide (Lys-Gly) (interchain with G-Cter in SUMO)). Lys416 is covalently cross-linked (Glycyl lysine isopeptide (Lys-Gly) (interchain with G-Cter in SUMO2)). Lys467 is covalently cross-linked (Glycyl lysine isopeptide (Lys-Gly) (interchain with G-Cter in SUMO)). Lys480 is covalently cross-linked (Glycyl lysine isopeptide (Lys-Gly) (interchain with G-Cter in ubiquitin)). Disordered stretches follow at residues 507–540 (TRQK…ASAF) and 556–614 (NDSD…AVSA). Over residues 569-579 (GRGRGRGRRGG) the composition is skewed to basic residues. An asymmetric dimethylarginine mark is found at Arg570, Arg572, Arg574, Arg576, Arg577, Arg580, Arg587, Arg592, and Arg594. Residues 570 to 594 (RGRGRGRRGGRGQNSASRGGSQRGR) carry the GAR motif. The segment covering 599–614 (LETSTRSRNSKTAVSA) has biased composition (polar residues). A Phosphoserine modification is found at Ser619. Lys625 participates in a covalent cross-link: Glycyl lysine isopeptide (Lys-Gly) (interchain with G-Cter in SUMO2). Residue Ser641 is modified to Phosphoserine. The residue at position 649 (Ser649) is a Phosphoserine; by PLK1. The tract at residues 651–708 (VEEDIFPTTSKTDQRWSSTSSSKIMSQSQVSKGVDFESSEDDDDDPFMNTSSLRRNRR) is disordered. Low complexity predominate over residues 667-681 (SSTSSSKIMSQSQVS). Lys673 carries the post-translational modification N6-lactoyllysine. Phosphoserine; by ATM is present on residues Ser676 and Ser678. Residues 687-696 (ESSEDDDDDP) are compositionally biased toward acidic residues. Ser688 bears the Phosphoserine; by CDK2 mark. A phosphoserine mark is found at Ser689 and Ser701. The segment covering 698-708 (MNTSSLRRNRR) has biased composition (polar residues).

Belongs to the MRE11/RAD32 family. In terms of assembly, component of the MRN complex composed of two heterodimers RAD50 and MRE11 associated with a single NBN. The MRN complexes dimerize on DNA to form joined MRN-MRN oligomers required for DNA double-strand break repair. As part of the MRN complex, interacts with MCM9; the interaction recruits the complex to DNA repair sites. Component of the BASC complex, at least composed of BRCA1, MSH2, MSH6, MLH1, ATM, BLM, RAD50, MRE11 and NBN. Found in a complex with TERF2. Interacts with DCLRE1C/Artemis and DCLRE1B/Apollo. Interacts with ATF2. Interacts with EXD2. Interacts with MRNIP. Interacts with SAMHD1; leading to stimulate 3'-5' exonuclease activity. Interacts (when ubiquitinated) with UBQLN4 (via its UBA domain). Interacts with CYREN (via XLF motif). Interacts with GFI1; promoting methylation by PRMT1. Interacts with DYNLL1; inhibiting the activity of MRE11. Interacts with C1QBP and RAD50; interaction takes place in absence of DNA damage to form the MRC (MRE11-RAD50-C1QBP) complex that inhibits the activity of MRE11. Interacts with AGER/RAGE. AGER is recruited to DNA double-strand break sites where it enhances MRE11 endonuclease activity to promote DNA repair. As to quaternary structure, (Microbial infection) Interacts with herpes simplex virus 1 protein UL12. The cofactor is Mn(2+). Phosphorylated by ATM at Ser-676 and Ser-678 in response to DNA damage, promoting MRE11 activity: phosphorylation activates MRE11 by preventing the interaction between MRE11 and the C1QBP inhibitor. Phosphorylation at Ser-649 by PLK1 primes for phosphorylation at Ser-688 by CK2, inhibiting recruitment of the MRN complex to DNA damage sites. Post-translationally, asymmetric dimethylation by PRMT1 promotes MRE11 exonuclease activity. In terms of processing, lactylation at Lys-673 by CREBBP/CBP in response to DNA damage promotes DNA binding and MRE11 activity. Acetylated on lysine residues by KAT2A /GCN5. Post-translationally, ubiquitinated following DNA damage. Ubiquitination triggers interaction with UBQLN4, leading to MRE11 removal from chromatin and degradation by the proteasome. Ubiquitinated at Lys-339 and Lys-480 by RNF126 via 'Lys-27'- and 'Lys-29'-linked polyubiquitin chains, promoting the exonuclease activity of MRE11. In terms of processing, SUMOylated by PIAS1, stabilizing MRE11 on chromatin during end resection. DeSUMOylated by SENP3 following removal from DNA double-strand breaks (DSBs). Ufmylation at Lys-282 promotes MRE11 activity and is required for activation of the ATM and ATR kinases by the MRN complex. Post-translationally, (Microbial infection) Following infection by adenovirus E4, ubiquitinated and degraded by a SCF-like E3 ubiquitin ligase complex containing viral proteins E1B-55K and E4-ORF6.

The protein resides in the nucleus. It localises to the chromosome. Its subcellular location is the telomere. With respect to regulation, interaction with SAMHD1 stimulates the double-strand-specific 3'-5' exonuclease activity. RBBP8/CtIP specifically promotes the endonuclease activity to clear protein-DNA adducts and generate clean double-strand break ends. DYNLL1-binding inhibits the activity of MRE11. MRE11 activity is inhibited by C1QBP: in absence of DNA damage, C1QBP interacts with unphosphorylated MRE11, preventing formation and activity of the MRN complex. The mirin-derivative PFM39, specifically inhibits the 3'-5' exonuclease activity. The N-alkylated mirin-derivatives PFM03 and PFM01 specifically inhibit the endonuclease activity. In terms of biological role, core component of the MRN complex, which plays a central role in double-strand break (DSB) repair, DNA recombination, maintenance of telomere integrity and meiosis. The MRN complex is involved in the repair of DNA double-strand breaks (DSBs) via homologous recombination (HR), an error-free mechanism which primarily occurs during S and G2 phases. The complex (1) mediates the end resection of damaged DNA, which generates proper single-stranded DNA, a key initial steps in HR, and is (2) required for the recruitment of other repair factors and efficient activation of ATM and ATR upon DNA damage. Within the MRN complex, MRE11 possesses both single-strand endonuclease activity and double-strand-specific 3'-5' exonuclease activity. After DSBs, MRE11 is loaded onto DSBs sites and cleaves DNA by cooperating with RBBP8/CtIP to initiate end resection. MRE11 first endonucleolytically cleaves the 5' strand at DNA DSB ends to prevent non-homologous end joining (NHEJ) and licence HR. It then generates a single-stranded DNA gap via 3' to 5' exonucleolytic degradation to create entry sites for EXO1- and DNA2-mediated 5' to 3' long-range resection, which is required for single-strand invasion and recombination. RBBP8/CtIP specifically promotes the endonuclease activity of MRE11 to clear protein-DNA adducts and generate clean double-strand break ends. MRE11 endonuclease activity is also enhanced by AGER/RAGE. The MRN complex is also required for DNA damage signaling via activation of the ATM and ATR kinases: the nuclease activity of MRE11 is not required to activate ATM and ATR. The MRN complex is also required for the processing of R-loops. The MRN complex is involved in the activation of the cGAS-STING pathway induced by DNA damage during tumorigenesis: the MRN complex acts by displacing CGAS from nucleosome sequestration, thereby activating it. In telomeres the MRN complex may modulate t-loop formation. Its function is as follows. MRE11 contains two DNA-binding domains (DBDs), enabling it to bind both single-stranded DNA (ssDNA) and double-stranded DNA (dsDNA). This is Double-strand break repair protein MRE11 from Homo sapiens (Human).